We begin with the raw amino-acid sequence, 344 residues long: Phosphoserine phosphatase (344 aa).

Positions 48–120 (VVTILGKDRV…ERLGLDIVMQ (73 aa)) constitute an ACT domain. D135 (nucleophile) is an active-site residue. 2 residues coordinate Mg(2+): D135 and D137. D137 serves as the catalytic Proton donor. Substrate-binding positions include E144, R180, 223–224 (SG), and K268. D291 serves as a coordination point for Mg(2+).

This sequence belongs to the HAD-like hydrolase superfamily. SerB family. Requires Mg(2+) as cofactor.

It catalyses the reaction O-phospho-L-serine + H2O = L-serine + phosphate. The catalysed reaction is O-phospho-D-serine + H2O = D-serine + phosphate. It participates in amino-acid biosynthesis; L-serine biosynthesis; L-serine from 3-phospho-D-glycerate: step 3/3. The sequence is that of Phosphoserine phosphatase from Archaeoglobus fulgidus (strain ATCC 49558 / DSM 4304 / JCM 9628 / NBRC 100126 / VC-16).